Here is a 286-residue protein sequence, read N- to C-terminus: Foldase protein PrsA 1 (286 aa).

A signal peptide spans 1 to 18 (MKKAMLALAATSVIALSA). Residue Cys-19 is the site of N-palmitoyl cysteine attachment. Cys-19 carries S-diacylglycerol cysteine lipidation. In terms of domain architecture, PpiC spans 130 to 220 (KPEIKASHIL…FGYHIIKVTD (91 aa)).

It belongs to the PrsA family.

The protein localises to the cell membrane. The catalysed reaction is [protein]-peptidylproline (omega=180) = [protein]-peptidylproline (omega=0). Its function is as follows. Plays a major role in protein secretion by helping the post-translocational extracellular folding of several secreted proteins. The sequence is that of Foldase protein PrsA 1 (prsA1) from Bacillus cereus (strain ATCC 14579 / DSM 31 / CCUG 7414 / JCM 2152 / NBRC 15305 / NCIMB 9373 / NCTC 2599 / NRRL B-3711).